Consider the following 136-residue polypeptide: Small ribosomal subunit protein uS19 (136 aa).

The tract at residues 114 to 136 (RSRVSHGSAGVGATRSSKFVPLK) is disordered.

The protein belongs to the universal ribosomal protein uS19 family.

Functionally, protein S19 forms a complex with S13 that binds strongly to the 16S ribosomal RNA. The protein is Small ribosomal subunit protein uS19 of Methanosarcina barkeri (strain Fusaro / DSM 804).